The sequence spans 70 residues: SPbeta prophage-derived uncharacterized HTH-type transcriptional regulator YopO (70 aa).

Residues 5–59 (IKQLMVKRGITIEELSRETMIDMQTLNKIIEMPDESDVTTIKLIALVLNVSIDEL) enclose the HTH cro/C1-type domain. The segment at residues 16–35 (IEELSRETMIDMQTLNKIIE) is a DNA-binding region (H-T-H motif).

This chain is SPbeta prophage-derived uncharacterized HTH-type transcriptional regulator YopO (yopO), found in Bacillus subtilis (strain 168).